The primary structure comprises 244 residues: ATP synthase subunit a (244 aa).

7 helical membrane-spanning segments follow: residues 20 to 40, 81 to 101, 113 to 133, 140 to 160, 176 to 196, 202 to 222, and 223 to 243; these read FFDV…VIVI, GILF…LNVM, QLLV…IWGF, FLNI…LVFI, LFAN…AAIY, FIGI…LGIA, and FLQA…IINL.

It belongs to the ATPase A chain family. F-type ATPases have 2 components, CF(1) - the catalytic core - and CF(0) - the membrane proton channel. CF(1) has five subunits: alpha(3), beta(3), gamma(1), delta(1), epsilon(1). CF(0) has three main subunits: a, b and c.

It localises to the mitochondrion inner membrane. Its function is as follows. Mitochondrial membrane ATP synthase (F(1)F(0) ATP synthase or Complex V) produces ATP from ADP in the presence of a proton gradient across the membrane which is generated by electron transport complexes of the respiratory chain. F-type ATPases consist of two structural domains, F(1) - containing the extramembraneous catalytic core and F(0) - containing the membrane proton channel, linked together by a central stalk and a peripheral stalk. During catalysis, ATP synthesis in the catalytic domain of F(1) is coupled via a rotary mechanism of the central stalk subunits to proton translocation. Key component of the proton channel; it may play a direct role in the translocation of protons across the membrane. This is ATP synthase subunit a (atp6) from Dictyostelium citrinum (Slime mold).